The sequence spans 173 residues: NAD(P)H-quinone oxidoreductase subunit J (173 aa).

Belongs to the complex I 30 kDa subunit family. NDH-1 can be composed of about 15 different subunits; different subcomplexes with different compositions have been identified which probably have different functions.

It localises to the cellular thylakoid membrane. The enzyme catalyses a plastoquinone + NADH + (n+1) H(+)(in) = a plastoquinol + NAD(+) + n H(+)(out). The catalysed reaction is a plastoquinone + NADPH + (n+1) H(+)(in) = a plastoquinol + NADP(+) + n H(+)(out). NDH-1 shuttles electrons from an unknown electron donor, via FMN and iron-sulfur (Fe-S) centers, to quinones in the respiratory and/or the photosynthetic chain. The immediate electron acceptor for the enzyme in this species is believed to be plastoquinone. Couples the redox reaction to proton translocation, and thus conserves the redox energy in a proton gradient. Cyanobacterial NDH-1 also plays a role in inorganic carbon-concentration. The polypeptide is NAD(P)H-quinone oxidoreductase subunit J (Prochlorococcus marinus (strain NATL1A)).